A 373-amino-acid chain; its full sequence is DNA replication and repair protein RecF (373 aa).

ATP is bound at residue 30–37 (GENAQGKT).

It belongs to the RecF family.

The protein localises to the cytoplasm. In terms of biological role, the RecF protein is involved in DNA metabolism; it is required for DNA replication and normal SOS inducibility. RecF binds preferentially to single-stranded, linear DNA. It also seems to bind ATP. In Limosilactobacillus fermentum (strain NBRC 3956 / LMG 18251) (Lactobacillus fermentum), this protein is DNA replication and repair protein RecF.